The sequence spans 217 residues: 3,4-dihydroxy-2-butanone 4-phosphate synthase (217 aa).

Residues 37 to 38, Asp42, 150 to 154, and Glu174 each bind D-ribulose 5-phosphate; these read RE and RGGHT. Glu38 serves as a coordination point for Mg(2+). His153 contacts Mg(2+).

It belongs to the DHBP synthase family. Homodimer. It depends on Mg(2+) as a cofactor. The cofactor is Mn(2+).

It catalyses the reaction D-ribulose 5-phosphate = (2S)-2-hydroxy-3-oxobutyl phosphate + formate + H(+). It functions in the pathway cofactor biosynthesis; riboflavin biosynthesis; 2-hydroxy-3-oxobutyl phosphate from D-ribulose 5-phosphate: step 1/1. Catalyzes the conversion of D-ribulose 5-phosphate to formate and 3,4-dihydroxy-2-butanone 4-phosphate. In Citrobacter koseri (strain ATCC BAA-895 / CDC 4225-83 / SGSC4696), this protein is 3,4-dihydroxy-2-butanone 4-phosphate synthase.